We begin with the raw amino-acid sequence, 280 residues long: Shikimate kinase (280 aa).

74–84 (PGGSGLGSSSA) provides a ligand contact to ATP.

It belongs to the GHMP kinase family. Archaeal shikimate kinase subfamily.

It localises to the cytoplasm. It catalyses the reaction shikimate + ATP = 3-phosphoshikimate + ADP + H(+). The protein operates within metabolic intermediate biosynthesis; chorismate biosynthesis; chorismate from D-erythrose 4-phosphate and phosphoenolpyruvate: step 5/7. In Archaeoglobus fulgidus (strain ATCC 49558 / DSM 4304 / JCM 9628 / NBRC 100126 / VC-16), this protein is Shikimate kinase (aroK).